The following is a 147-amino-acid chain: Small nuclear ribonucleoprotein-associated protein B (147 aa).

Residues 1 to 84 enclose the Sm domain; that stretch reads MGTTKMVSLL…IVSLSVQGPP (84 aa). 2 disordered regions span residues 87–106 and 128–147; these read DPSMRGSLLSGPGVARPAGR and APPPPAGFGRGAPPPGFRPV.

This sequence belongs to the snRNP SmB/SmN family. Belongs to the 40S cdc5-associated complex (or cwf complex), a spliceosome sub-complex reminiscent of a late-stage spliceosome composed of the U2, U5 and U6 snRNAs and at least brr2, cdc5, cwf2/prp3, cwf3/syf1, cwf4/syf3, cwf5/ecm2, spp42/cwf6, cwf7/spf27, cwf8, cwf9, cwf10, cwf11, cwf12, prp45/cwf13, cwf14, cwf15, cwf16, cwf17, cwf18, cwf19, cwf20, cwf21, cwf22, cwf23, cwf24, cwf25, cwf26, cyp7/cwf27, cwf28, cwf29/ist3, lea1, msl1, prp5/cwf1, prp10, prp12/sap130, prp17, prp22, sap61, sap62, sap114, sap145, slu7, smb1, smd1, smd3, smf1, smg1 and syf2.

Its subcellular location is the nucleus. The protein resides in the cytoplasm. Its function is as follows. Plays a role in pre-mRNA splicing as a core component of the spliceosomal U1, U2, U4 and U5 small nuclear ribonucleoproteins (snRNPs), the building blocks of the spliceosome. This chain is Small nuclear ribonucleoprotein-associated protein B (smb1), found in Schizosaccharomyces pombe (strain 972 / ATCC 24843) (Fission yeast).